We begin with the raw amino-acid sequence, 246 residues long: tRNA (guanine-N(1)-)-methyltransferase (246 aa).

S-adenosyl-L-methionine-binding positions include G114 and 134–139; that span reads IGDYIL. Basic and acidic residues predominate over residues 219–231; the sequence is LRRPDLWERHEGA. A disordered region spans residues 219 to 246; sequence LRRPDLWERHEGARAQSPSGARRQKKER.

Belongs to the RNA methyltransferase TrmD family. Homodimer.

The protein resides in the cytoplasm. The enzyme catalyses guanosine(37) in tRNA + S-adenosyl-L-methionine = N(1)-methylguanosine(37) in tRNA + S-adenosyl-L-homocysteine + H(+). Functionally, specifically methylates guanosine-37 in various tRNAs. The sequence is that of tRNA (guanine-N(1)-)-methyltransferase from Rhizorhabdus wittichii (strain DSM 6014 / CCUG 31198 / JCM 15750 / NBRC 105917 / EY 4224 / RW1) (Sphingomonas wittichii).